The sequence spans 469 residues: 3-isopropylmalate dehydratase large subunit (469 aa).

[4Fe-4S] cluster is bound by residues Cys-347, Cys-407, and Cys-410.

It belongs to the aconitase/IPM isomerase family. LeuC type 1 subfamily. As to quaternary structure, heterodimer of LeuC and LeuD. Requires [4Fe-4S] cluster as cofactor.

The enzyme catalyses (2R,3S)-3-isopropylmalate = (2S)-2-isopropylmalate. It functions in the pathway amino-acid biosynthesis; L-leucine biosynthesis; L-leucine from 3-methyl-2-oxobutanoate: step 2/4. Its function is as follows. Catalyzes the isomerization between 2-isopropylmalate and 3-isopropylmalate, via the formation of 2-isopropylmaleate. This chain is 3-isopropylmalate dehydratase large subunit, found in Prochlorococcus marinus (strain NATL1A).